A 504-amino-acid chain; its full sequence is Cytochrome P450 4A24 (504 aa).

2 consecutive transmembrane segments (helical) span residues 6–26 and 112–132; these read LASASGLLQVASLLGLLLLLL and VVYRLLIPWIGCGLLLLNGQT. Cys451 provides a ligand contact to heme.

This sequence belongs to the cytochrome P450 family. Requires heme as cofactor.

It localises to the endoplasmic reticulum membrane. It carries out the reaction an omega-methyl-long-chain fatty acid + reduced [NADPH--hemoprotein reductase] + O2 = an omega-hydroxy-long-chain fatty acid + oxidized [NADPH--hemoprotein reductase] + H2O + H(+). Its function is as follows. Catalyzes the omega- and (omega-1)-hydroxylation of various fatty acids such as laurate and palmitate. Has no activity toward taurochenodeoxycholic acid. The sequence is that of Cytochrome P450 4A24 (CYP4A24) from Sus scrofa (Pig).